The sequence spans 240 residues: Probable transcriptional regulatory protein MADE_1004275 (240 aa).

The protein belongs to the TACO1 family.

The protein localises to the cytoplasm. The polypeptide is Probable transcriptional regulatory protein MADE_1004275 (Alteromonas mediterranea (strain DSM 17117 / CIP 110805 / LMG 28347 / Deep ecotype)).